The sequence spans 310 residues: Ribosomal protein L11 methyltransferase (310 aa).

4 residues coordinate S-adenosyl-L-methionine: Thr-156, Gly-179, Asp-201, and Asn-246.

The protein belongs to the methyltransferase superfamily. PrmA family.

It localises to the cytoplasm. It catalyses the reaction L-lysyl-[protein] + 3 S-adenosyl-L-methionine = N(6),N(6),N(6)-trimethyl-L-lysyl-[protein] + 3 S-adenosyl-L-homocysteine + 3 H(+). In terms of biological role, methylates ribosomal protein L11. The chain is Ribosomal protein L11 methyltransferase from Desulfatibacillum aliphaticivorans.